Reading from the N-terminus, the 436-residue chain is APO protein 1, chloroplastic (436 aa).

The N-terminal 47 residues, 1 to 47, are a transit peptide targeting the chloroplast; the sequence is MLLVSPACRGVYLQTIDPKPIDFSARASYALCFQIPTSIPKRECLMR. 2 APO domains span residues 155–240 and 329–414; these read ACSE…EIPE and ACGY…RVPQ.

Belongs to the APO family. Expressed at low level. Expressed at higher level in leaves. Expressed at lower level in roots, stems, siliques and flowers.

It localises to the plastid. Its subcellular location is the chloroplast. Its function is as follows. Involved in the stable assembly of several 4Fe-4S cluster-containing complexes of chloroplasts. May participate in 4Fe-4S cofactor incorporation into psaA and/or psaB during translation. The polypeptide is APO protein 1, chloroplastic (APO1) (Arabidopsis thaliana (Mouse-ear cress)).